Reading from the N-terminus, the 1868-residue chain is Protein TIC 214 (1868 aa).

Helical transmembrane passes span 11 to 31 (LLLLWMNIVNSVVLVGLYYGF), 64 to 84 (FIMGQFIIFISTYYPPLHLAL), 87 to 107 (PHTLTVLVLPYLLLHFLFFWN), 126 to 146 (LSIQYVFLNNLIFQLFNHFIL), 166 to 186 (ILFVISSFFGWLIGHILLMKS), and 221 to 241 (IFSILLFITCVCYLGRMPSPI). The span at 248–276 (ESSKGEEKKKTEKERDVEMETISKTKKIE) shows a compositional bias: basic and acidic residues. Disordered regions lie at residues 248-277 (ESSKGEEKKKTEKERDVEMETISKTKKIEQ), 617-643 (FDFEEEEEEEEEEDDEEEPTDDHGIRS), 658-700 (DEDT…QAEE), 782-806 (TSDYAGEGAKEEEHEEEKREYKRKE), and 1537-1607 (YIDP…RKKK). Over residues 617–636 (FDFEEEEEEEEEEDDEEEPT) the composition is skewed to acidic residues. A compositionally biased stretch (polar residues) spans 674 to 683 (AKNSDQAKNS). Basic and acidic residues-rich tracts occupy residues 684–700 (DQAKKSDQAKNSDQAEE), 789–806 (GAKEEEHEEEKREYKRKE), and 1537–1576 (YIDPKVKSNQKERSNPKAESNQKEYLELENRNRDEKERQH).

The protein belongs to the TIC214 family. In terms of assembly, part of the Tic complex.

It localises to the plastid. The protein localises to the chloroplast inner membrane. Involved in protein precursor import into chloroplasts. May be part of an intermediate translocation complex acting as a protein-conducting channel at the inner envelope. This chain is Protein TIC 214, found in Nuphar advena (Common spatterdock).